We begin with the raw amino-acid sequence, 414 residues long: CCA-adding enzyme (414 aa).

ATP is bound by residues glycine 8 and arginine 11. The CTP site is built by glycine 8 and arginine 11. Mg(2+)-binding residues include aspartate 21 and aspartate 23. The ATP site is built by arginine 92, arginine 138, and arginine 141. The CTP site is built by arginine 92, arginine 138, and arginine 141.

This sequence belongs to the tRNA nucleotidyltransferase/poly(A) polymerase family. Bacterial CCA-adding enzyme type 2 subfamily. Mg(2+) serves as cofactor.

The enzyme catalyses a tRNA precursor + 2 CTP + ATP = a tRNA with a 3' CCA end + 3 diphosphate. The catalysed reaction is a tRNA with a 3' CCA end + 2 CTP + ATP = a tRNA with a 3' CCACCA end + 3 diphosphate. Its function is as follows. Catalyzes the addition and repair of the essential 3'-terminal CCA sequence in tRNAs without using a nucleic acid template. Adds these three nucleotides in the order of C, C, and A to the tRNA nucleotide-73, using CTP and ATP as substrates and producing inorganic pyrophosphate. tRNA 3'-terminal CCA addition is required both for tRNA processing and repair. Also involved in tRNA surveillance by mediating tandem CCA addition to generate a CCACCA at the 3' terminus of unstable tRNAs. While stable tRNAs receive only 3'-terminal CCA, unstable tRNAs are marked with CCACCA and rapidly degraded. This is CCA-adding enzyme from Buchnera aphidicola subsp. Cinara cedri (strain Cc).